Here is a 274-residue protein sequence, read N- to C-terminus: Cytochrome b-c1 complex subunit Rieske, mitochondrial (274 aa).

Topologically, residues 79 to 103 are mitochondrial matrix; that stretch reads SHTDIKVPDFSDYRRSEVLDKTKSS. The helical transmembrane segment at 104 to 140 threads the bilayer; that stretch reads RESSDARKGFSYLVTAATAVGVTYAAKSIVTQFVSSM. The Mitochondrial intermembrane segment spans residues 141–274; sequence SASADVLAMS…FTGDDMVIVG (134 aa). A Rieske domain is found at 187–272; it reads EAAVELSQLR…YEFTGDDMVI (86 aa). C217, H219, C236, H239, and S241 together coordinate [2Fe-2S] cluster. An intrachain disulfide couples C222 to C238.

This sequence belongs to the Rieske iron-sulfur protein family. In terms of assembly, component of the ubiquinol-cytochrome c oxidoreductase (cytochrome b-c1 complex, complex III, CIII), a multisubunit enzyme composed of 11 subunits. The complex is composed of 3 respiratory subunits cytochrome b, cytochrome c1 and Rieske protein UQCRFS1, 2 core protein subunits UQCRC1/QCR1 and UQCRC2/QCR2, and 6 low-molecular weight protein subunits UQCRH/QCR6, UQCRB/QCR7, UQCRQ/QCR8, UQCR10/QCR9, UQCR11/QCR10 and subunit 9, the cleavage product of Rieske protein UQCRFS1. The complex exists as an obligatory dimer and forms supercomplexes (SCs) in the inner mitochondrial membrane with NADH-ubiquinone oxidoreductase (complex I, CI) and cytochrome c oxidase (complex IV, CIV), resulting in different assemblies (supercomplex SCI(1)III(2)IV(1) and megacomplex MCI(2)III(2)IV(2)). Incorporation of the Rieske protein UQCRFS1 is the penultimate step in complex III assembly. Interacts with TTC19, which is involved in the clearance of UQCRFS1 fragments. Component of the ubiquinol-cytochrome c oxidoreductase (cytochrome b-c1 complex, complex III, CIII). Subunit 9 corresponds to the mitochondrial targeting sequence (MTS) of Rieske protein UQCRFS1. It is retained after processing and incorporated inside complex III, where it remains bound to the complex and localizes between the 2 core subunits UQCRC1/QCR1 and UQCRC2/QCR2. [2Fe-2S] cluster serves as cofactor. Proteolytic processing is necessary for the correct insertion of UQCRFS1 in the complex III dimer. Several fragments are generated during UQCRFS1 insertion, most probably due to the endogenous matrix-processing peptidase (MPP) activity of the 2 core protein subunits UQCRC1/QCR1 and UQCRC2/QCR2, which are homologous to the 2 mitochondrial-processing peptidase (MPP) subunits beta-MPP and alpha-MPP respectively. The action of the protease is also necessary for the clearance of the UQCRFS1 fragments.

It is found in the mitochondrion inner membrane. The catalysed reaction is a quinol + 2 Fe(III)-[cytochrome c](out) = a quinone + 2 Fe(II)-[cytochrome c](out) + 2 H(+)(out). Component of the ubiquinol-cytochrome c oxidoreductase, a multisubunit transmembrane complex that is part of the mitochondrial electron transport chain which drives oxidative phosphorylation. The respiratory chain contains 3 multisubunit complexes succinate dehydrogenase (complex II, CII), ubiquinol-cytochrome c oxidoreductase (cytochrome b-c1 complex, complex III, CIII) and cytochrome c oxidase (complex IV, CIV), that cooperate to transfer electrons derived from NADH and succinate to molecular oxygen, creating an electrochemical gradient over the inner membrane that drives transmembrane transport and the ATP synthase. The cytochrome b-c1 complex catalyzes electron transfer from ubiquinol to cytochrome c, linking this redox reaction to translocation of protons across the mitochondrial inner membrane, with protons being carried across the membrane as hydrogens on the quinol. In the process called Q cycle, 2 protons are consumed from the matrix, 4 protons are released into the intermembrane space and 2 electrons are passed to cytochrome c. The Rieske protein is a catalytic core subunit containing a [2Fe-2S] iron-sulfur cluster. It cycles between 2 conformational states during catalysis to transfer electrons from the quinol bound in the Q(0) site in cytochrome b to cytochrome c1. Incorporation of UQCRFS1 is the penultimate step in complex III assembly. In terms of biological role, component of the ubiquinol-cytochrome c oxidoreductase (cytochrome b-c1 complex, complex III, CIII). UQCRFS1 undergoes proteolytic processing once it is incorporated in the complex III dimer. One of the fragments, called subunit 9, corresponds to its mitochondrial targeting sequence (MTS). The proteolytic processing is necessary for the correct insertion of UQCRFS1 in the complex III dimer, but the persistence of UQCRFS1-derived fragments may prevent newly imported UQCRFS1 to be processed and assembled into complex III and is detrimental for the complex III structure and function. This Lagothrix lagotricha (Brown woolly monkey) protein is Cytochrome b-c1 complex subunit Rieske, mitochondrial (UQCRFS1).